The primary structure comprises 511 residues: Bifunctional purine biosynthesis protein PurH (511 aa).

Residues 1 to 145 (MKRRALVSVS…KNHQHVTVVV (145 aa)) form the MGS-like domain.

The protein belongs to the PurH family.

It carries out the reaction (6R)-10-formyltetrahydrofolate + 5-amino-1-(5-phospho-beta-D-ribosyl)imidazole-4-carboxamide = 5-formamido-1-(5-phospho-D-ribosyl)imidazole-4-carboxamide + (6S)-5,6,7,8-tetrahydrofolate. The enzyme catalyses IMP + H2O = 5-formamido-1-(5-phospho-D-ribosyl)imidazole-4-carboxamide. It functions in the pathway purine metabolism; IMP biosynthesis via de novo pathway; 5-formamido-1-(5-phospho-D-ribosyl)imidazole-4-carboxamide from 5-amino-1-(5-phospho-D-ribosyl)imidazole-4-carboxamide (10-formyl THF route): step 1/1. Its pathway is purine metabolism; IMP biosynthesis via de novo pathway; IMP from 5-formamido-1-(5-phospho-D-ribosyl)imidazole-4-carboxamide: step 1/1. The polypeptide is Bifunctional purine biosynthesis protein PurH (Halalkalibacterium halodurans (strain ATCC BAA-125 / DSM 18197 / FERM 7344 / JCM 9153 / C-125) (Bacillus halodurans)).